Here is a 569-residue protein sequence, read N- to C-terminus: Pyrophosphate--fructose 6-phosphate 1-phosphotransferase subunit beta 2 (569 aa).

G107 provides a ligand contact to diphosphate. D201 is a Mg(2+) binding site. Substrate is bound by residues 229 to 231 (TID), 268 to 269 (KY), 276 to 278 (MGR), E337, and 442 to 445 (YEGR). D231 acts as the Proton acceptor in catalysis.

It belongs to the phosphofructokinase type A (PFKA) family. PPi-dependent PFK group II subfamily. Clade 'Long' sub-subfamily. Tetramer of two alpha (regulatory) and two beta (catalytic) chains. Mg(2+) is required as a cofactor.

Its subcellular location is the cytoplasm. The catalysed reaction is beta-D-fructose 6-phosphate + diphosphate = beta-D-fructose 1,6-bisphosphate + phosphate + H(+). Its pathway is carbohydrate degradation; glycolysis; D-glyceraldehyde 3-phosphate and glycerone phosphate from D-glucose: step 3/4. With respect to regulation, allosterically activated by fructose 2,6-bisphosphate. Its function is as follows. Catalytic subunit of pyrophosphate--fructose 6-phosphate 1-phosphotransferase. Catalyzes the phosphorylation of D-fructose 6-phosphate, the first committing step of glycolysis. Uses inorganic phosphate (PPi) as phosphoryl donor instead of ATP like common ATP-dependent phosphofructokinases (ATP-PFKs), which renders the reaction reversible, and can thus function both in glycolysis and gluconeogenesis. The sequence is that of Pyrophosphate--fructose 6-phosphate 1-phosphotransferase subunit beta 2 from Arabidopsis thaliana (Mouse-ear cress).